The primary structure comprises 533 residues: Glucomannan 4-beta-mannosyltransferase 9 (533 aa).

A helical transmembrane segment spans residues 37-57; it reads IVPALRLGVYICLTMSVMLFV. D136 is an active-site residue. Residues D195 and D197 each coordinate substrate. D289 is an active-site residue. The next 4 membrane-spanning stretches (helical) occupy residues 368–388, 404–426, 483–503, and 510–530; these read LVAHIVTFIFYCVILPATVLV, VITLLNAVGTPRSLHLMVFWILF, VLELGVGMYLLFVGCYDAFFG, and YLFAQAIAFFIAGFGQIGTIV.

This sequence belongs to the glycosyltransferase 2 family. Plant cellulose synthase-like A subfamily. As to expression, expressed in cotyledons at the base of the hypocotyls, in root elongation zone, lateral root primordia, vascular system of young leaves, abscission zone of the pedicle,.

Its subcellular location is the golgi apparatus membrane. It catalyses the reaction GDP-mannose + (glucomannan)n = GDP + (glucomannan)n+1.. In terms of biological role, possesses glucomannan synthase and mannan synthase activities in vitro. Mannan synthase consists of a 4-beta-mannosyltransferase activity on mannan using GDP-mannose. The beta-1,4-mannan product is the backbone for galactomannan synthesis by galactomannan galactosyltransferase. Galactomannan is a noncellulosic polysaccharides of plant cell wall. Required for lateral root development. This chain is Glucomannan 4-beta-mannosyltransferase 9, found in Arabidopsis thaliana (Mouse-ear cress).